The primary structure comprises 534 residues: Probable alpha-galactosidase A (534 aa).

Positions 1-25 (MRLITRWIPLANALASTMPVQVVAS) are cleaved as a signal peptide. Residues cysteine 47 and cysteine 79 are joined by a disulfide bond. Residues asparagine 50, asparagine 88, asparagine 94, and asparagine 124 are each glycosylated (N-linked (GlcNAc...) asparagine). A disulfide bridge connects residues cysteine 127 and cysteine 157. Residue aspartate 155 is the Nucleophile of the active site. Asparagine 204 carries an N-linked (GlcNAc...) asparagine glycan. Residue aspartate 213 is the Proton donor of the active site. One can recognise a Ricin B-type lectin domain in the interval 413-534 (CSQVIPTGLI…GLPAGVHVAL (122 aa)). Cysteines 430 and 443 form a disulfide. Asparagine 444 carries N-linked (GlcNAc...) asparagine glycosylation. Cysteine 468 and cysteine 481 form a disulfide bridge.

It belongs to the glycosyl hydrolase 27 family.

The protein localises to the secreted. The enzyme catalyses Hydrolysis of terminal, non-reducing alpha-D-galactose residues in alpha-D-galactosides, including galactose oligosaccharides, galactomannans and galactolipids.. Functionally, hydrolyzes a variety of simple alpha-D-galactoside as well as more complex molecules such as oligosaccharides and polysaccharides. This is Probable alpha-galactosidase A (aglA) from Aspergillus oryzae (strain ATCC 42149 / RIB 40) (Yellow koji mold).